Reading from the N-terminus, the 166-residue chain is uncharacterized protein (166 aa).

117-124 (AAKSGGKT) provides a ligand contact to ATP.

This is an uncharacterized protein from Mycoplasma pneumoniae (strain ATCC 29342 / M129 / Subtype 1) (Mycoplasmoides pneumoniae).